Reading from the N-terminus, the 321-residue chain is MKPLALHGHERNITQIKYNRMGDLLFSAAKDTRPTVWYSLNGERLGTYNGHGGAVWCIDVNYDTTQFISGGADNCLRLWDCEKGVTLSKIETKSAVRTCGFSYGGNEIMLSTDRQMGQSCRILIFDVRDNMESPILTIPVDNSKVTAGLWGPLDQFLVTGHENGELCQWDVKSGNKLISVQEHSKQINDIQMYKDSTMFVTASKDTTAKLFDTDSLRHLKTYKTDRPVNSAALSPIKDHVVVGGGQEAMEVTTTSTRVGKFDARFFHVVFEEEIGRVKGHFGPINSLAFHPDGRSYSSGGEDGYVRIHSFDPSYDDIEFEY.

WD repeat units follow at residues 8 to 47 (GHERNITQIKYNRMGDLLFSAAKDTRPTVWYSLNGERLGT), 50 to 89 (GHGGAVWCIDVNYDTTQFISGGADNCLRLWDCEKGVTLSK), 140 to 179 (VDNSKVTAGLWGPLDQFLVTGHENGELCQWDVKSGNKLIS), 182 to 221 (EHSKQINDIQMYKDSTMFVTASKDTTAKLFDTDSLRHLKT), and 279 to 318 (GHFGPINSLAFHPDGRSYSSGGEDGYVRIHSFDPSYDDIE).

This sequence belongs to the eIF-3 subunit I family. Component of the eukaryotic translation initiation factor 3 (eIF-3) complex.

The protein localises to the cytoplasm. In terms of biological role, component of the eukaryotic translation initiation factor 3 (eIF-3) complex, which is involved in protein synthesis of a specialized repertoire of mRNAs and, together with other initiation factors, stimulates binding of mRNA and methionyl-tRNAi to the 40S ribosome. The eIF-3 complex specifically targets and initiates translation of a subset of mRNAs involved in cell proliferation. The polypeptide is Eukaryotic translation initiation factor 3 subunit I (Nematostella vectensis (Starlet sea anemone)).